The sequence spans 148 residues: MVHFTAEEKAIITSLWAKVNVEETGGEALGRLLVVYPWTQRFFDNFGNLSSASAIMGNPKVKAHGKKVLSSLGEAVTHMDDLKDAFAHLSRLHCDELHVDPENFRVTPGKRAVIVLAHHFGREFTPQVQAAWKKLMSAVAIAMGHKYH.

The Globin domain maps to 3-148 (HFTAEEKAII…VAIAMGHKYH (146 aa)). 2 residues coordinate heme b: His-64 and His-93.

It belongs to the globin family. Heterotetramer of two alpha chains and two gamma chains in fetal hemoglobin (Hb F). As to expression, red blood cells.

Its function is as follows. Gamma chains make up the fetal hemoglobin F, in combination with alpha chains. This is Hemoglobin subunit gamma (HBG) from Carlito syrichta (Philippine tarsier).